The chain runs to 938 residues: Glutamate receptor ionotropic, NMDA 1 (938 aa).

An N-terminal signal peptide occupies residues Met1–Ala18. Residues Arg19–Gln559 are Extracellular-facing. Asn61, Asn203, Asn239, Asn276, Asn300, Asn350, Asn368, Asn440, Asn471, and Asn491 each carry an N-linked (GlcNAc...) asparagine glycan. A disulfide bond links Cys79 and Cys308. Cystine bridges form between Cys420/Cys454 and Cys436/Cys455. Positions 516, 518, and 523 each coordinate glycine. The helical transmembrane segment at Ser560–Leu580 threads the bilayer. Residues Asp581–Thr602 lie on the Cytoplasmic side of the membrane. Positions Leu603–Pro624 form an intramembrane region, discontinuously helical. Positions Leu603–Pro624 are pore-forming. Residues Arg625–Arg630 lie on the Cytoplasmic side of the membrane. Residues Ile631 to Tyr647 traverse the membrane as a helical segment. At Thr648–Asn812 the chain is on the extracellular side. Asn674 is a glycosylation site (N-linked (GlcNAc...) asparagine). Glycine is bound by residues Ser688 and Asp732. Cysteines 744 and 798 form a disulfide. N-linked (GlcNAc...) asparagine glycosylation occurs at Asn771. The helical transmembrane segment at Met813–Ile833 threads the bilayer. At Glu834–Ser938 the chain is on the cytoplasmic side. Residue Lys877 is modified to Phosphoserine. Phosphoserine; by PKC occurs at positions 889, 890, 896, and 897. The disordered stretch occupies residues Ser889–Ser938. Lys898 bears the Phosphoserine mark. Basic and acidic residues predominate over residues Val916–Gly927.

This sequence belongs to the glutamate-gated ion channel (TC 1.A.10.1) family. NR1/GRIN1 subfamily. As to quaternary structure, heterotetramer; the NMDAR subunits are modular and harbor tiered domains that function in concert to regulate opening and closing of the cation-selective ion channel pore. Forms heterotetrameric channels composed of two GluN1/zeta subunits (GRIN1), and two identical GluN2/epsilon subunits (GRIN2A, GRIN2B, GRIN2C or GRIN2D) or GluN3 subunits (GRIN3A or GRIN3B) (in vitro). Can also form heterotetrameric channels that contain at least two GluN1 subunits and at least two different GluN2 subunits (or a combination of one GluN2 and one GluN3 subunits) (in vitro). In vivo, the subunit composition may vary in function of the expression levels of the different subunits. Found in a complex with GRIN2A or GRIN2B, GRIN3A and PPP2CB. Found in a complex with GRIN2A or GRIN2B and GRIN3B;. Interacts with SNX27 (via PDZ domain); the interaction is required for recycling to the plasma membrane when endocytosed and prevent degradation in lysosomes. Interacts with DLG4 and MPDZ. Interacts with LRFN1 and LRFN2. Interacts with MYZAP. Found in a complex with DLG4 and PRR7. Found in a complex with GRIN2B and PRR7. Interacts with PRR7; the interaction is reduced following NMDA receptor activity. NMDA is probably regulated by C-terminal phosphorylation of an isoform of NR1 by PKC. Dephosphorylated on Ser-897 probably by protein phosphatase 2A (PPP2CB). Its phosphorylated state is influenced by the formation of the NMDAR-PPP2CB complex and the NMDAR channel activity. In terms of tissue distribution, detected throughout the brain, in brain cortex, cerebellum, thalamus and olfactory bulb.

It is found in the cell membrane. The protein localises to the postsynaptic cell membrane. Its subcellular location is the synaptic cell membrane. It localises to the postsynaptic density membrane. The enzyme catalyses Ca(2+)(in) = Ca(2+)(out). It catalyses the reaction Na(+)(in) = Na(+)(out). The catalysed reaction is K(+)(in) = K(+)(out). NMDA glutamate receptor activity is potentiated by Zn2(+) in a dose-dependent fashion. The potentiating effect of Zn2(+) is at submicromolar concentrations and its inhibitory action is at high micromolar to millimolar concentrations. Excitatory glycine receptors are inhibited by D-serine at 100uM. In terms of biological role, component of N-methyl-D-aspartate (NMDA) receptors (NMDARs) that function as heterotetrameric, ligand-gated cation channels with high calcium permeability and voltage-dependent block by Mg(2+). NMDARs participate in synaptic plasticity for learning and memory formation by contributing to the long-term potentiation (LTP). Channel activation requires binding of the neurotransmitter L-glutamate to the GluN2 subunit, glycine or D-serine binding to the GluN1 subunit, plus membrane depolarization to eliminate channel inhibition by Mg(2+). NMDARs mediate simultaneously the potasium efflux and the influx of calcium and sodium. Each GluN2 or GluN3 subunit confers differential attributes to channel properties, including activation, deactivation and desensitization kinetics, pH sensitivity, Ca2(+) permeability, and binding to allosteric modulators. Forms excitatory glycinergic receptor complexes with GluN3 alone which are activated by glycine binding to the GluN1 and GluN3 subunits. The chain is Glutamate receptor ionotropic, NMDA 1 from Rattus norvegicus (Rat).